Consider the following 463-residue polypeptide: Chromosomal replication initiator protein DnaA (463 aa).

The tract at residues M1–V83 is domain I, interacts with DnaA modulators. Residues V83–S126 are domain II. Residues N127–A343 form a domain III, AAA+ region region. 4 residues coordinate ATP: G171, G173, K174, and T175. The tract at residues N344 to S463 is domain IV, binds dsDNA.

It belongs to the DnaA family. In terms of assembly, oligomerizes as a right-handed, spiral filament on DNA at oriC.

The protein resides in the cytoplasm. Plays an essential role in the initiation and regulation of chromosomal replication. ATP-DnaA binds to the origin of replication (oriC) to initiate formation of the DNA replication initiation complex once per cell cycle. Binds the DnaA box (a 9 base pair repeat at the origin) and separates the double-stranded (ds)DNA. Forms a right-handed helical filament on oriC DNA; dsDNA binds to the exterior of the filament while single-stranded (ss)DNA is stabiized in the filament's interior. The ATP-DnaA-oriC complex binds and stabilizes one strand of the AT-rich DNA unwinding element (DUE), permitting loading of DNA polymerase. After initiation quickly degrades to an ADP-DnaA complex that is not apt for DNA replication. Binds acidic phospholipids. The polypeptide is Chromosomal replication initiator protein DnaA (Erwinia tasmaniensis (strain DSM 17950 / CFBP 7177 / CIP 109463 / NCPPB 4357 / Et1/99)).